The following is a 321-amino-acid chain: Porphobilinogen deaminase (321 aa).

The residue at position 243 (cysteine 243) is an S-(dipyrrolylmethanemethyl)cysteine.

Belongs to the HMBS family. As to quaternary structure, monomer. The cofactor is dipyrromethane.

It catalyses the reaction 4 porphobilinogen + H2O = hydroxymethylbilane + 4 NH4(+). It functions in the pathway porphyrin-containing compound metabolism; protoporphyrin-IX biosynthesis; coproporphyrinogen-III from 5-aminolevulinate: step 2/4. Tetrapolymerization of the monopyrrole PBG into the hydroxymethylbilane pre-uroporphyrinogen in several discrete steps. The protein is Porphobilinogen deaminase of Histophilus somni (strain 129Pt) (Haemophilus somnus).